The following is a 241-amino-acid chain: FKBP-type peptidyl-prolyl cis-trans isomerase FkpA (241 aa).

Residues 153-241 (ETKITVHYKG…IELLDVVNGV (89 aa)) form the PPIase FKBP-type domain.

The protein belongs to the FKBP-type PPIase family.

The enzyme catalyses [protein]-peptidylproline (omega=180) = [protein]-peptidylproline (omega=0). Functionally, PPIases accelerate the folding of proteins. It catalyzes the cis-trans isomerization of proline imidic peptide bonds in oligopeptides. This Buchnera aphidicola subsp. Acyrthosiphon pisum (strain APS) (Acyrthosiphon pisum symbiotic bacterium) protein is FKBP-type peptidyl-prolyl cis-trans isomerase FkpA (fkpA).